We begin with the raw amino-acid sequence, 373 residues long: Pulmonary surfactant-associated protein B (373 aa).

Positions 1–22 (MAKSHLLPWLLLLPILCGPGTA) are cleaved as a signal peptide. Positions 23-187 (AAITYSLACA…PQTQDLSEQL (165 aa)) are excised as a propeptide. Residues 24-64 (AITYSLACAQGPEFWCQSLEQALQCRALGHCLQEVWGHVEA) form the Saposin A-type domain. Saposin B-type domains follow at residues 64–146 (ADDL…KPRH), 191–268 (PIPY…SSED), and 287–362 (QDSD…AAPF). 9 disulfides stabilise this stretch: cysteine 68–cysteine 142, cysteine 71–cysteine 136, cysteine 99–cysteine 111, cysteine 195–cysteine 264, cysteine 198–cysteine 258, cysteine 222–cysteine 233, cysteine 291–cysteine 358, cysteine 294–cysteine 352, and cysteine 317–cysteine 327. N-linked (GlcNAc...) asparagine glycosylation occurs at asparagine 73. Residues 267–373 (EDSAGPALPA…PLQCVHSPHF (107 aa)) constitute a propeptide that is removed on maturation. Asparagine 303 is a glycosylation site (N-linked (GlcNAc...) asparagine).

Homodimer; disulfide-linked.

It is found in the secreted. The protein resides in the extracellular space. Its subcellular location is the surface film. Pulmonary surfactant-associated proteins promote alveolar stability by lowering the surface tension at the air-liquid interface in the peripheral air spaces. SP-B increases the collapse pressure of palmitic acid to nearly 70 millinewtons per meter. The chain is Pulmonary surfactant-associated protein B (SFTPB) from Bos taurus (Bovine).